The chain runs to 249 residues: Ribonuclease 3 (249 aa).

In terms of domain architecture, RNase III spans S29–R151. E65 is a binding site for Mg(2+). The active site involves D69. The Mg(2+) site is built by E137 and E140. Residue E140 is part of the active site. Residues N179–N249 enclose the DRBM domain. The segment at G227–N249 is disordered. Residues Q236–N249 show a composition bias toward basic and acidic residues.

This sequence belongs to the ribonuclease III family. As to quaternary structure, homodimer. Mg(2+) serves as cofactor.

It localises to the cytoplasm. The enzyme catalyses Endonucleolytic cleavage to 5'-phosphomonoester.. Digests double-stranded RNA. Involved in the processing of primary rRNA transcript to yield the immediate precursors to the large and small rRNAs (23S and 16S). Processes some mRNAs, and tRNAs when they are encoded in the rRNA operon. Processes pre-crRNA and tracrRNA of type II CRISPR loci if present in the organism. In Prochlorococcus marinus (strain SARG / CCMP1375 / SS120), this protein is Ribonuclease 3.